We begin with the raw amino-acid sequence, 250 residues long: Phosphoribosylaminoimidazole-succinocarboxamide synthase (250 aa).

Belongs to the SAICAR synthetase family.

It catalyses the reaction 5-amino-1-(5-phospho-D-ribosyl)imidazole-4-carboxylate + L-aspartate + ATP = (2S)-2-[5-amino-1-(5-phospho-beta-D-ribosyl)imidazole-4-carboxamido]succinate + ADP + phosphate + 2 H(+). Its pathway is purine metabolism; IMP biosynthesis via de novo pathway; 5-amino-1-(5-phospho-D-ribosyl)imidazole-4-carboxamide from 5-amino-1-(5-phospho-D-ribosyl)imidazole-4-carboxylate: step 1/2. The protein is Phosphoribosylaminoimidazole-succinocarboxamide synthase of Bifidobacterium adolescentis (strain ATCC 15703 / DSM 20083 / NCTC 11814 / E194a).